The sequence spans 3902 residues: Mediator of RNA polymerase II transcription subunit 12 (3902 aa).

Disordered regions lie at residues 414–576, 619–674, 694–940, 977–1029, 1812–1831, 2463–2675, 2719–2771, 2876–3151, 3195–3549, and 3563–3902; these read ESLT…EELP, FEPF…NPKL, AFDP…LEAL, VVEK…PEPP, TSHKTKDVKRKSANKTTETR, TVEP…NRKQ, AGAS…SSSM, RIME…PEMQ, LQAG…SSNQ, and AGLN…QQQY. A compositionally biased stretch (acidic residues) spans 420 to 430; the sequence is EPEEDPEEGPE. Over residues 709–721 the composition is skewed to pro residues; it reads PTPPEAPPPPPPV. 4 stretches are compositionally biased toward basic and acidic residues: residues 740-802, 912-928, 977-1004, and 1018-1027; these read EDGK…EHLN, KAGDDASKKTKEGKKPD, VVEKDKDKTPEKATEGEKEAEKDAEKLP, and KTPEKPKTPE. Positions 1812-1824 are enriched in basic residues; sequence TSHKTKDVKRKSA. The interval 2409–3902 is required for nuclear localization; it reads QTTRLDKVAK…MGQFPNQQQY (1494 aa). Residues 2474–2547 show a composition bias toward basic and acidic residues; that stretch reads AAVKKPEEET…VTAKDTEKDT (74 aa). Positions 2480-2526 form a coiled coil; it reads EEETAEKKKDEAKKADEKTTKADDEKKKDETADAKKDNEKQKEEKDK. 3 stretches are compositionally biased toward low complexity: residues 2548 to 2566, 2614 to 2632, and 2734 to 2748; these read AAPTDAAKAAAAPVAAAPD, SRANANAETAAAAETSSTT, and PHPGMQHQSGMQHQG. Basic and acidic residues predominate over residues 2876–2979; the sequence is RIMEEQRILR…ERLERERVAR (104 aa). 4 stretches are compositionally biased toward low complexity: residues 2980–3001, 3010–3143, 3196–3205, and 3226–3236; these read EALAAQQAQQAQQAQQAQQAQQ, QQQR…QRNP, QAGQAAGQQQ, and PQQQQQQPQQP. The span at 3237–3248 shows a compositional bias: polar residues; it reads GTSQIPNTTPTR. Low complexity-rich tracts occupy residues 3250 to 3275, 3284 to 3295, and 3317 to 3389; these read ANPMQGQQQQAGMQNYQNQPVLGQPG, GQQQQNQFQRQG, and GQQQ…FGRQ. A compositionally biased stretch (polar residues) spans 3391–3409; the sequence is APNQENFQQQPGFNQNAAG. Composition is skewed to low complexity over residues 3410-3446, 3454-3539, and 3570-3619; these read QNYQRPEQQQQSQNQWNQLNQQMRPQQPQQPSQQQQN, QSQQ…QGNQ, and SSGN…RPGM. Residues 3620–3649 are compositionally biased toward gly residues; sequence GQQGMGQQGMGQQGGMGQSGRGQPGMGGQS. 3 stretches are compositionally biased toward low complexity: residues 3663 to 3700, 3710 to 3742, and 3760 to 3830; these read MGQPGMQQSGMQQQHGMQQQQPGAQQSGLQQAGMQQQH, QQGRNNYGSMGQQGQQSGQQQAQQHQQMSQQAQ, and QQQQ…HRGQ. Positions 3831-3841 are enriched in gly residues; it reads GQQGHGMGGAG. Positions 3842 to 3888 are enriched in low complexity; it reads QQHQQVPQQQQNQYFQPQQQQDQRMQQQPGGQQQQQQGQSGQQQNNQ. A compositionally biased stretch (polar residues) spans 3889-3902; the sequence is HYNNMGQFPNQQQY.

This sequence belongs to the Mediator complex subunit 12 family. Component of the Mediator complex.

The protein localises to the nucleus. In terms of biological role, component of the Mediator complex, a coactivator involved in regulated gene transcription of nearly all RNA polymerase II-dependent genes. Mediator functions as a bridge to convey information from gene-specific regulatory proteins to the basal RNA polymerase II transcription machinery. Mediator is recruited to promoters by direct interactions with regulatory proteins and serves as a scaffold for the assembly of a functional preinitiation complex with RNA polymerase II and the general transcription factors. The sequence is that of Mediator of RNA polymerase II transcription subunit 12 (dpy-22) from Caenorhabditis briggsae.